A 369-amino-acid chain; its full sequence is Ferrochelatase (369 aa).

Fe cation contacts are provided by H210 and E291.

This sequence belongs to the ferrochelatase family.

The protein localises to the cytoplasm. The catalysed reaction is heme b + 2 H(+) = protoporphyrin IX + Fe(2+). Its pathway is porphyrin-containing compound metabolism; protoheme biosynthesis; protoheme from protoporphyrin-IX: step 1/1. Functionally, catalyzes the ferrous insertion into protoporphyrin IX. This chain is Ferrochelatase, found in Thioalkalivibrio sulfidiphilus (strain HL-EbGR7).